Here is a 231-residue protein sequence, read N- to C-terminus: Orotidine 5'-phosphate decarboxylase (231 aa).

Substrate is bound by residues Asp-11, Lys-34, 61–70, Thr-117, Arg-179, Gln-188, Gly-208, and Arg-209; that span reads DLKLHDIPNT. Lys-63 functions as the Proton donor in the catalytic mechanism.

It belongs to the OMP decarboxylase family. Type 1 subfamily. As to quaternary structure, homodimer.

The enzyme catalyses orotidine 5'-phosphate + H(+) = UMP + CO2. The protein operates within pyrimidine metabolism; UMP biosynthesis via de novo pathway; UMP from orotate: step 2/2. Functionally, catalyzes the decarboxylation of orotidine 5'-monophosphate (OMP) to uridine 5'-monophosphate (UMP). The polypeptide is Orotidine 5'-phosphate decarboxylase (Streptococcus thermophilus (strain ATCC BAA-491 / LMD-9)).